Reading from the N-terminus, the 396-residue chain is Ribosomal RNA large subunit methyltransferase I (396 aa).

Residues 2–81 (TVSIYLAKGR…EAIDKDFFVR (80 aa)) form the PUA domain.

The protein belongs to the methyltransferase superfamily. RlmI family.

Its subcellular location is the cytoplasm. The enzyme catalyses cytidine(1962) in 23S rRNA + S-adenosyl-L-methionine = 5-methylcytidine(1962) in 23S rRNA + S-adenosyl-L-homocysteine + H(+). Its function is as follows. Specifically methylates the cytosine at position 1962 (m5C1962) of 23S rRNA. The chain is Ribosomal RNA large subunit methyltransferase I from Aliivibrio fischeri (strain MJ11) (Vibrio fischeri).